The sequence spans 260 residues: Thiazole synthase (260 aa).

Catalysis depends on Lys-96, which acts as the Schiff-base intermediate with DXP. Residues Gly-157, 184–185, and 206–207 each bind 1-deoxy-D-xylulose 5-phosphate; these read AG and NT.

The protein belongs to the ThiG family. Homotetramer. Forms heterodimers with either ThiH or ThiS.

The protein resides in the cytoplasm. The catalysed reaction is [ThiS sulfur-carrier protein]-C-terminal-Gly-aminoethanethioate + 2-iminoacetate + 1-deoxy-D-xylulose 5-phosphate = [ThiS sulfur-carrier protein]-C-terminal Gly-Gly + 2-[(2R,5Z)-2-carboxy-4-methylthiazol-5(2H)-ylidene]ethyl phosphate + 2 H2O + H(+). The protein operates within cofactor biosynthesis; thiamine diphosphate biosynthesis. In terms of biological role, catalyzes the rearrangement of 1-deoxy-D-xylulose 5-phosphate (DXP) to produce the thiazole phosphate moiety of thiamine. Sulfur is provided by the thiocarboxylate moiety of the carrier protein ThiS. In vitro, sulfur can be provided by H(2)S. The polypeptide is Thiazole synthase (Rhodopseudomonas palustris (strain HaA2)).